The primary structure comprises 208 residues: Thymidylate kinase (208 aa).

10 to 17 (GPEGSGKT) contacts ATP.

It belongs to the thymidylate kinase family.

The enzyme catalyses dTMP + ATP = dTDP + ADP. In terms of biological role, phosphorylation of dTMP to form dTDP in both de novo and salvage pathways of dTTP synthesis. The protein is Thymidylate kinase of Bacillus cereus (strain Q1).